The chain runs to 466 residues: Asparagine--tRNA ligase (466 aa).

It belongs to the class-II aminoacyl-tRNA synthetase family. In terms of assembly, homodimer.

The protein resides in the cytoplasm. The catalysed reaction is tRNA(Asn) + L-asparagine + ATP = L-asparaginyl-tRNA(Asn) + AMP + diphosphate + H(+). This is Asparagine--tRNA ligase from Escherichia coli O157:H7.